The primary structure comprises 337 residues: MPRVKLGTQGLEVSKLGFGCMGLSGDYNDALPEEQGIAVIKEAFNCGITFFDTSDIYGENGSNEELLGKALKQLPREKIQVGTKFGIHEIGFSGVKAKGTPDYVRSCCEASLKRLDVDYIDLFYIHRIDTTVPIEITMGELKKLVEEGKIKYVGLSEASPDTIRRAHAVHPVTALQIEYSLWTRDIEDEIVPLCRQLGIGIVPYSPIGRGLFAGKAIKESLPENSVLTSHPRFVGENLEKNKQIYYRIEALSQKHGCTPVQLALAWVLHQGEDVVPIPGTTKIKNLHNNVGALKVKLTKEDLKEISDAVPLDEVAGESIHEVIAVTNWKFANTPPLK.

Tyrosine 57 acts as the Proton donor in catalysis. A substrate-binding site is contributed by histidine 126. 205–214 (SPIGRGLFAG) is an NADP(+) binding site.

It belongs to the aldo/keto reductase family.

It catalyses the reaction raucaffrinoline + NADP(+) = perakine + NADPH + H(+). Functionally, aldo-keto reductase involved in the biosynthesis of monoterpenoid indole alkaloids. Broad substrate specificity enzyme with a high selectivity in the group of alkaloids. Can use perakine, 19(S),20(R)-dihydro-peraksine-17,21-al, cinnamic aldehyde, p-coumaric aldehyde and 3-(3,4,5-trimethoxyphenyl)propanal as substrates, but not ketosteroids such as progesterone. NADPH could not be replaced by NADH. The sequence is that of Perakine reductase (PR) from Rauvolfia serpentina (Serpentine wood).